A 335-amino-acid polypeptide reads, in one-letter code: MKVVINGFGRIGRLVLRQILKRNSSVEVLAINDLVPGDALTYLFKFDSTHGRFPEDVRCEADHLIVGKRKIQFLSERNVQNLPWKDLGVDLVIECTGLFTKKEDAEKHIQAGAKRVLISAPGKGDIPTFVMGVNHKTFNPEKDFVISNASCTTNCLAPIAKVLLDNFGITEGLMTTVHAATATQLVVDGPSKKDWRGGRGCLQNIIPASTGAAKAVTLCLPELKGKLTGMAFRVPIEDVSVVDLTVRLDKSTTYDDICKAMKQASETDLKGILDYTDEQVVSSDFIGSEYSSIFDALAGIALNDRFFKLVAWYDNETGYATRIVDLLEYVEKNSK.

NAD(+) contacts are provided by residues 10–11, aspartate 33, arginine 77, and serine 119; that span reads RI. D-glyceraldehyde 3-phosphate is bound by residues 150–152, threonine 181, 210–211, and arginine 233; these read SCT and TG. Cysteine 151 functions as the Nucleophile in the catalytic mechanism. Asparagine 315 contributes to the NAD(+) binding site.

It belongs to the glyceraldehyde-3-phosphate dehydrogenase family. In terms of assembly, homotetramer.

The protein localises to the cytoplasm. The catalysed reaction is D-glyceraldehyde 3-phosphate + phosphate + NAD(+) = (2R)-3-phospho-glyceroyl phosphate + NADH + H(+). The protein operates within carbohydrate degradation; glycolysis; pyruvate from D-glyceraldehyde 3-phosphate: step 1/5. Catalyzes the oxidative phosphorylation of glyceraldehyde 3-phosphate (G3P) to 1,3-bisphosphoglycerate (BPG) using the cofactor NAD. The first reaction step involves the formation of a hemiacetal intermediate between G3P and a cysteine residue, and this hemiacetal intermediate is then oxidized to a thioester, with concomitant reduction of NAD to NADH. The reduced NADH is then exchanged with the second NAD, and the thioester is attacked by a nucleophilic inorganic phosphate to produce BPG. The chain is Glyceraldehyde-3-phosphate dehydrogenase (gap) from Chlamydia pneumoniae (Chlamydophila pneumoniae).